The following is a 635-amino-acid chain: Threonine--tRNA ligase (635 aa).

The TGS domain occupies 1 to 61; the sequence is MVSIRLPDGS…DRDASLAIVT (61 aa). The tract at residues 242–533 is catalytic; sequence DHRKLGKQLD…LIEHHAGAMP (292 aa). Zn(2+) is bound by residues Cys-333, His-384, and His-510.

The protein belongs to the class-II aminoacyl-tRNA synthetase family. As to quaternary structure, homodimer. Zn(2+) is required as a cofactor.

The protein resides in the cytoplasm. The catalysed reaction is tRNA(Thr) + L-threonine + ATP = L-threonyl-tRNA(Thr) + AMP + diphosphate + H(+). Its function is as follows. Catalyzes the attachment of threonine to tRNA(Thr) in a two-step reaction: L-threonine is first activated by ATP to form Thr-AMP and then transferred to the acceptor end of tRNA(Thr). Also edits incorrectly charged L-seryl-tRNA(Thr). This is Threonine--tRNA ligase from Burkholderia orbicola (strain MC0-3).